An 861-amino-acid polypeptide reads, in one-letter code: Valine--tRNA ligase (861 aa).

The short motif at 42–52 (PNITGRIHMGH) is the 'HIGH' region element. The short motif at 521 to 525 (KMSKS) is the 'KMSKS' region element. Lys-524 lines the ATP pocket. Residues 792–861 (VAGLNLQSEI…ILNQILGDLM (70 aa)) adopt a coiled-coil conformation.

The protein belongs to the class-I aminoacyl-tRNA synthetase family. ValS type 1 subfamily. In terms of assembly, monomer.

The protein resides in the cytoplasm. The catalysed reaction is tRNA(Val) + L-valine + ATP = L-valyl-tRNA(Val) + AMP + diphosphate. Its function is as follows. Catalyzes the attachment of valine to tRNA(Val). As ValRS can inadvertently accommodate and process structurally similar amino acids such as threonine, to avoid such errors, it has a 'posttransfer' editing activity that hydrolyzes mischarged Thr-tRNA(Val) in a tRNA-dependent manner. This is Valine--tRNA ligase from Pseudothermotoga lettingae (strain ATCC BAA-301 / DSM 14385 / NBRC 107922 / TMO) (Thermotoga lettingae).